We begin with the raw amino-acid sequence, 538 residues long: Importin subunit alpha-4 (538 aa).

The region spanning 1–58 (MSLRPSTRAELRKKIYKTGVDADEARRRREDNLVEIRKNKREDSLLKKRREGMMLQQQ) is the IBB domain. ARM repeat units follow at residues 112 to 152 (SPPI…NVAS), 155 to 194 (SDHTRVVIEQGAVPIFVKLLTSASDDVREQAVWALGNVAG), 197 to 237 (PNCR…NFCR), 239 to 278 (KPPTPFEQVKPALPILRQLIYLNDEEVLTDACWALSYLSD), 281 to 320 (NDKIQAVIEAGVCPRLVELLGHQSPTVLIPALRTVGNIVT), 323 to 363 (DSQT…NITA), 366 to 405 (KLQIEAVVGAGIILPLVHLLQNAEFDIKKEAAWAISNATS), and 409 to 448 (HEQIQYLVTQGCIKPLCDLLICPDPRIVTVCLEGLENILK).

This sequence belongs to the importin alpha family. In terms of assembly, forms a complex with importin subunit beta-1. Interacts with A.tumefaciens VirD2 and VirE2.

The protein resides in the nucleus envelope. Binds to conventional NLS motifs and mediates nuclear protein import across the nuclear envelope. Acts as a cellular receptor for the nuclear import of the virD2 protein of Agrobacterium and is essential for Agrobacterium-mediated root transformation. In Arabidopsis thaliana (Mouse-ear cress), this protein is Importin subunit alpha-4.